Here is a 507-residue protein sequence, read N- to C-terminus: Glutamate--tRNA ligase (507 aa).

Residues 14–24 carry the 'HIGH' region motif; it reads PSPTGYLHIGG. The short motif at 261–265 is the 'KMSKS' region element; that stretch reads KLSKR. Lys264 contributes to the ATP binding site.

It belongs to the class-I aminoacyl-tRNA synthetase family. Glutamate--tRNA ligase type 1 subfamily. In terms of assembly, monomer.

The protein resides in the cytoplasm. The enzyme catalyses tRNA(Glu) + L-glutamate + ATP = L-glutamyl-tRNA(Glu) + AMP + diphosphate. Catalyzes the attachment of glutamate to tRNA(Glu) in a two-step reaction: glutamate is first activated by ATP to form Glu-AMP and then transferred to the acceptor end of tRNA(Glu). This is Glutamate--tRNA ligase from Roseiflexus castenholzii (strain DSM 13941 / HLO8).